We begin with the raw amino-acid sequence, 93 residues long: uncharacterized protein (93 aa).

This is an uncharacterized protein from Acidianus sp. F28 (AFV-2).